The sequence spans 372 residues: MSAVPTHEAEPYVGLMSGTSLDGIDAVLAEIGTGNQVRLLRTRYIHYPDDLRAQLLALHTPQADEVHLAALAANALARLYAEAVGALLEGIDPAKIRAIGCHGQTLRHRPGDGYTIQIGNASLLAELAGIAVVSDFRSRDIAAGGQGAPLVPAFHARVLAHPEIHRVIANVGGIANITDLPPNGPIRGWDTGPGNMLMDAWIHRHQGSRYDRDGSWAAEGSVAAGLLQALLRHPYLEQRPPKSAGREQFNLESLDTTLAGLGQRLEPGTVQATLLEFTAVSLCDAVTQECRGAQELYVCGGGAHNGALMRRIAALLPHVRVTTTADLGIDPDWVEALAFAWLARQTMHGEAGNLPAVTGACGERILGAIHPA.

18 to 25 (GTSLDGID) is a binding site for ATP.

It belongs to the anhydro-N-acetylmuramic acid kinase family.

It carries out the reaction 1,6-anhydro-N-acetyl-beta-muramate + ATP + H2O = N-acetyl-D-muramate 6-phosphate + ADP + H(+). Its pathway is amino-sugar metabolism; 1,6-anhydro-N-acetylmuramate degradation. The protein operates within cell wall biogenesis; peptidoglycan recycling. In terms of biological role, catalyzes the specific phosphorylation of 1,6-anhydro-N-acetylmuramic acid (anhMurNAc) with the simultaneous cleavage of the 1,6-anhydro ring, generating MurNAc-6-P. Is required for the utilization of anhMurNAc either imported from the medium or derived from its own cell wall murein, and thus plays a role in cell wall recycling. The chain is Anhydro-N-acetylmuramic acid kinase from Thiobacillus denitrificans (strain ATCC 25259 / T1).